Here is an 87-residue protein sequence, read N- to C-terminus: Small ribosomal subunit protein uS15 (87 aa).

The tract at residues 1 to 22 (MSEINKAEIVASNARAPSDTGS) is disordered.

This sequence belongs to the universal ribosomal protein uS15 family. Part of the 30S ribosomal subunit. Forms a bridge to the 50S subunit in the 70S ribosome, contacting the 23S rRNA.

Its function is as follows. One of the primary rRNA binding proteins, it binds directly to 16S rRNA where it helps nucleate assembly of the platform of the 30S subunit by binding and bridging several RNA helices of the 16S rRNA. In terms of biological role, forms an intersubunit bridge (bridge B4) with the 23S rRNA of the 50S subunit in the ribosome. This Leptothrix cholodnii (strain ATCC 51168 / LMG 8142 / SP-6) (Leptothrix discophora (strain SP-6)) protein is Small ribosomal subunit protein uS15.